A 543-amino-acid chain; its full sequence is Periplasmic oligopeptide-binding protein OppA (543 aa).

The signal sequence occupies residues 1-26 (MSNITKKSLIAAGILTALIAASAATA). An intrachain disulfide couples cysteine 297 to cysteine 443.

The protein belongs to the bacterial solute-binding protein 5 family. In terms of assembly, the complex is composed of two ATP-binding proteins (OppD and OppF), two transmembrane proteins (OppB and OppC) and a solute-binding protein (OppA).

It localises to the periplasm. Its function is as follows. Part of the ABC transporter complex OppABCDF involved in the uptake of oligopeptides, including the cell wall murein tripeptide L-alanyl-gamma-D-glutamyl-meso-diaminopimelate. Plays an important nutritional role and is involved in the recycling of cell wall peptides. Binds peptides containing from two to five amino acid residues regardless of their sequence. Also binds cell wall peptides, such as L-alanyl-gamma-D-glutamyl-meso-diaminopimelate. This Salmonella typhimurium (strain LT2 / SGSC1412 / ATCC 700720) protein is Periplasmic oligopeptide-binding protein OppA.